Consider the following 88-residue polypeptide: Phosphocarrier protein HPr (88 aa).

One can recognise an HPr domain in the interval 1-88 (MAQKTFTVTA…DTMSKEGLGE (88 aa)). A Phosphoserine modification is found at Ser12. Residue His15 is the Pros-phosphohistidine intermediate of the active site. Ser46 is subject to Phosphoserine; by HPrK/P.

Belongs to the HPr family.

It localises to the cytoplasm. Its activity is regulated as follows. Phosphorylation on Ser-46 inhibits the phosphoryl transfer from enzyme I to HPr. Its function is as follows. General (non sugar-specific) component of the phosphoenolpyruvate-dependent sugar phosphotransferase system (sugar PTS). This major carbohydrate active-transport system catalyzes the phosphorylation of incoming sugar substrates concomitantly with their translocation across the cell membrane. The phosphoryl group from phosphoenolpyruvate (PEP) is transferred to the phosphoryl carrier protein HPr by enzyme I. Phospho-HPr then transfers it to the PTS EIIA domain. In terms of biological role, P-Ser-HPr interacts with the catabolite control protein A (CcpA), forming a complex that binds to DNA at the catabolite response elements cre, operator sites preceding a large number of catabolite-regulated genes. Thus, P-Ser-HPr is a corepressor in carbon catabolite repression (CCR), a mechanism that allows bacteria to coordinate and optimize the utilization of available carbon sources. P-Ser-HPr also plays a role in inducer exclusion, in which it probably interacts with several non-PTS permeases and inhibits their transport activity. The polypeptide is Phosphocarrier protein HPr (ptsH) (Priestia megaterium (Bacillus megaterium)).